A 353-amino-acid chain; its full sequence is Lipase-specific foldase (353 aa).

Residues 1-19 (MAQADRPARGGLAARPMRG) are Cytoplasmic-facing. Residues 20–40 (ASFALAGLVACAACAAVVLWL) traverse the membrane as a helical segment. At 41–353 (RPAAPSPAPA…AASLDRGAGG (313 aa)) the chain is on the periplasmic side.

Belongs to the lipase chaperone family. Monomer. Interacts with lipase (lip).

It localises to the cell inner membrane. Involved in the folding of the extracellular lipase (lip) during its passage through the periplasm. This is Lipase-specific foldase from Burkholderia plantarii.